A 440-amino-acid polypeptide reads, in one-letter code: MNNNELYVSLDIGTSNTKVIVGEMTDDSLNIIGVGNVPSEGLKKGSIVDIDETVHSIRKAFDQAERMVGFPLRKAIVGVNGNYINIQDTNGVVAVSSENKEIQVEDVRRVMEAAQVVSVPHEQLIVDVIPKQFIVDGRDEITDPKKMLGVRLEVEGTLITGSKTILHNLLRCVERAGIEITDICLQPLAAGSAALSKDEKNLGVALIDIGGGSTTIAVFQNGHLTSTRVIPLGGENITKDISIGLRTSTEEAERVKKQLGHAYYDEASEDEIFEVTVIGTNQKQTFTQQEAANIIEARVEEILEIVSEELRSMGITDLPGGFVLTGGQAAMPGVMSLAQDVLQNNVRVASPNYIGVRDPQYMTGVGLIQFACRNARIQGRKIGFKMPEEAIQEIAVSSSEEQEQHHHQNEVQQRPKGKQKTQAEHNKQSKMKKLLSMFWE.

The tract at residues 396–440 (VSSSEEQEQHHHQNEVQQRPKGKQKTQAEHNKQSKMKKLLSMFWE) is disordered.

This sequence belongs to the FtsA/MreB family. Homodimer. Interacts with FtsZ.

It localises to the cell membrane. In terms of biological role, cell division protein that is required for the assembly of the Z ring. May serve as a membrane anchor for the Z ring. Binds and hydrolyzes ATP. Also involved in sporulation. The sequence is that of Cell division protein FtsA from Bacillus subtilis (strain 168).